Here is a 379-residue protein sequence, read N- to C-terminus: ATP-sensitive inward rectifier potassium channel 10 (379 aa).

Residues 1–61 lie on the Cytoplasmic side of the membrane; the sequence is MTSVAKVYYS…LKDLWTTFID (61 aa). Residue Arg-36 coordinates 1,2-dioctanoyl-sn-glycero-3-phospho-(1D-myo-inositol-4,5-bisphosphate). The chain crosses the membrane as a helical span at residues 62–88; sequence MQWRYKLLLFSATFAGTWFLFGVVWYL. Residues 89-114 lie on the Extracellular side of the membrane; sequence VAVAHGDLLELGPPANHTPCVVQVHT. Residues Cys-108 and Cys-140 are joined by a disulfide bond. The discontinuously helical; Pore-forming intramembrane region spans 115 to 131; that stretch reads LTGAFLFSLESQTTIGY. The Selectivity filter motif lies at 128–133; sequence TIGYGF. Residues 132–140 are Extracellular-facing; that stretch reads GFRYISEEC. Residues 141-166 traverse the membrane as a helical segment; the sequence is PLAIVLLIAQLVLTTILEIFITGTFL. The Cytoplasmic segment spans residues 167–379; it reads AKIARPKKRA…SALSVRISNV (213 aa). 3 residues coordinate 1,2-dioctanoyl-sn-glycero-3-phospho-(1D-myo-inositol-4,5-bisphosphate): Lys-168, Arg-171, and Lys-173. An ATP-binding site is contributed by 210–217; it reads GCQVTGKL.

The protein belongs to the inward rectifier-type potassium channel (TC 1.A.2.1) family. KCNJ10 subfamily. Homotetramer. In kidney cells, it forms heteromeric channels with Kir5.1/KCNJ16; this interaction is required for KCNJ16 localization to the basolateral membrane. Interacts with MAGI1, alone and possibly as a heteromer with KCNJ16; this interaction may facilitate KCNJ10/KCNJ16 potassium channel expression at the basolateral membrane in kidney cells. Interacts with PATJ. As to expression, widely expressed in adult brain, including in the neocortex, the stratum pyrimadale of the hippocampus and the piriform cortex. Expressed by cultured astrocytes and also by cocultured cortical neurons (at protein level). In the distal segment of the nephron, expressed in the distal convoluted tubule, the connecting tubule, and the early cortical collecting duct.

It is found in the membrane. The protein localises to the basolateral cell membrane. It catalyses the reaction K(+)(in) = K(+)(out). Channel activity is strongly regulated by variations of cytosolic pH; channels are activated by alkaline and inhibited by acidic pH values. Activated by phosphatidylinositol 4,5 biphosphate (PtdIns(4,5)P2). Inhibited by Ba(2+) and Cs(+). Functionally, may be responsible for potassium buffering action of glial cells in the brain. Inward rectifier potassium channels are characterized by a greater tendency to allow potassium to flow into the cell rather than out of it. Their voltage dependence is regulated by the concentration of extracellular potassium; as external potassium is raised, the voltage range of the channel opening shifts to more positive voltages. The inward rectification is mainly due to the blockage of outward current by internal magnesium. Can be blocked by extracellular barium and cesium. In the kidney, together with KCNJ16, mediates basolateral K(+) recycling in distal tubules; this process is critical for Na(+) reabsorption at the tubules. The chain is ATP-sensitive inward rectifier potassium channel 10 from Mus musculus (Mouse).